The following is a 260-amino-acid chain: uncharacterized protein (260 aa).

Residues 214–252 (IHQFIETEIERIMEAAKELKAEKKDMTSELNRLLLNTVE) adopt a coiled-coil conformation.

This is an uncharacterized protein from Bacillus subtilis (strain 168).